The sequence spans 188 residues: Peptidyl-tRNA hydrolase (188 aa).

Tyr-15 lines the tRNA pocket. The Proton acceptor role is filled by His-20. The tRNA site is built by Tyr-64, Asn-66, and Asn-112.

It belongs to the PTH family. As to quaternary structure, monomer.

It localises to the cytoplasm. It catalyses the reaction an N-acyl-L-alpha-aminoacyl-tRNA + H2O = an N-acyl-L-amino acid + a tRNA + H(+). Its function is as follows. Hydrolyzes ribosome-free peptidyl-tRNAs (with 1 or more amino acids incorporated), which drop off the ribosome during protein synthesis, or as a result of ribosome stalling. In terms of biological role, catalyzes the release of premature peptidyl moieties from peptidyl-tRNA molecules trapped in stalled 50S ribosomal subunits, and thus maintains levels of free tRNAs and 50S ribosomes. The sequence is that of Peptidyl-tRNA hydrolase from Cytophaga hutchinsonii (strain ATCC 33406 / DSM 1761 / CIP 103989 / NBRC 15051 / NCIMB 9469 / D465).